Reading from the N-terminus, the 164-residue chain is Peptide deformylase (164 aa).

Fe cation-binding residues include Cys87 and His129. Glu130 is an active-site residue. His133 is a Fe cation binding site.

This sequence belongs to the polypeptide deformylase family. Fe(2+) serves as cofactor.

It carries out the reaction N-terminal N-formyl-L-methionyl-[peptide] + H2O = N-terminal L-methionyl-[peptide] + formate. Functionally, removes the formyl group from the N-terminal Met of newly synthesized proteins. Requires at least a dipeptide for an efficient rate of reaction. N-terminal L-methionine is a prerequisite for activity but the enzyme has broad specificity at other positions. This Thermotoga sp. (strain RQ2) protein is Peptide deformylase.